A 368-amino-acid chain; its full sequence is Endophilin-A2 (368 aa).

The interval 1–21 is membrane-binding amphipathic helix; sequence MSVAGLKKQFYKASQLVSEKV. The BAR domain maps to 18 to 249; that stretch reads SEKVGGAEGT…LKRRVREASS (232 aa). A required for dimerization upon membrane association region spans residues 60 to 87; sequence PNPASRAKLTMLNTVSKIRGQVKNPGYP. Positions 180–250 form a coiled coil; that stretch reads DEELRQALEK…KRRVREASSR (71 aa). The segment at 218–254 is interaction with ARC; sequence LVDAQLDYHRQAVQILEELADKLKRRVREASSRPRRE. Residues 243 to 309 are disordered; the sequence is RVREASSRPR…SKSMPPLDQP (67 aa). Residues 245-261 show a composition bias toward basic and acidic residues; it reads REASSRPRREFKPRPQE. Ser288 bears the Phosphoserine mark. Thr298 is subject to Phosphothreonine. The SH3 domain occupies 306-365; the sequence is LDQPSCKALYDFEPENDGELGFREGDLITLTNQIDENWYEGMLHGQSGFFPLSYVQVLVP. Phosphotyrosine is present on Tyr315.

It belongs to the endophilin family. In terms of assembly, interacts with ARC, SYNJ1 and DNM1. Interacts with PDCD6IP. Interacts with BIN2. As to expression, detected in brain and testis (at protein level). Ubiquitous.

The protein localises to the cytoplasm. It localises to the early endosome membrane. Its subcellular location is the cell projection. The protein resides in the podosome. Its function is as follows. Implicated in endocytosis. May recruit other proteins to membranes with high curvature. This chain is Endophilin-A2 (Sh3gl1), found in Rattus norvegicus (Rat).